Consider the following 350-residue polypeptide: S-adenosylmethionine:tRNA ribosyltransferase-isomerase (350 aa).

The protein belongs to the QueA family. Monomer.

Its subcellular location is the cytoplasm. It carries out the reaction 7-aminomethyl-7-carbaguanosine(34) in tRNA + S-adenosyl-L-methionine = epoxyqueuosine(34) in tRNA + adenine + L-methionine + 2 H(+). Its pathway is tRNA modification; tRNA-queuosine biosynthesis. Its function is as follows. Transfers and isomerizes the ribose moiety from AdoMet to the 7-aminomethyl group of 7-deazaguanine (preQ1-tRNA) to give epoxyqueuosine (oQ-tRNA). The chain is S-adenosylmethionine:tRNA ribosyltransferase-isomerase from Vibrio campbellii (strain ATCC BAA-1116).